The sequence spans 520 residues: Hydroxymethylglutaryl-CoA synthase, cytoplasmic (520 aa).

Ser-4 is subject to Phosphoserine. (3S)-3-hydroxy-3-methylglutaryl-CoA is bound by residues Asp-43 and Ala-44. 44-46 (AGK) serves as a coordination point for CoA. N6-acetyllysine is present on Lys-46. The Proton donor/acceptor role is filled by Glu-95. (3S)-3-hydroxy-3-methylglutaryl-CoA-binding residues include Cys-129, Asn-167, Thr-171, Ser-221, and His-264. Cys-129 (acyl-thioester intermediate) is an active-site residue. A CoA-binding site is contributed by Asn-167. Residue Ser-221 coordinates CoA. His-264 (proton donor/acceptor) is an active-site residue. Lys-269 and Lys-273 together coordinate CoA. Residues Lys-273, Asn-343, and Ser-377 each contribute to the (3S)-3-hydroxy-3-methylglutaryl-CoA site. Position 273 is an N6-acetyllysine (Lys-273). Residues 488–520 (TATEHIPSPAKKVPRLPATSAESESAVISNGEH) are disordered. A phosphoserine mark is found at Ser-495 and Ser-516. Polar residues predominate over residues 507-520 (SAESESAVISNGEH).

It belongs to the thiolase-like superfamily. HMG-CoA synthase family. In terms of assembly, homodimer.

It localises to the cytoplasm. It catalyses the reaction acetoacetyl-CoA + acetyl-CoA + H2O = (3S)-3-hydroxy-3-methylglutaryl-CoA + CoA + H(+). Its pathway is metabolic intermediate biosynthesis; (R)-mevalonate biosynthesis; (R)-mevalonate from acetyl-CoA: step 2/3. Catalyzes the condensation of acetyl-CoA with acetoacetyl-CoA to form HMG-CoA, which is converted by HMG-CoA reductase (HMGCR) into mevalonate, a precursor for cholesterol synthesis. The polypeptide is Hydroxymethylglutaryl-CoA synthase, cytoplasmic (Mus musculus (Mouse)).